Here is a 344-residue protein sequence, read N- to C-terminus: AA9 family lytic polysaccharide monooxygenase cel61A (344 aa).

A signal peptide spans 1–21 (MIQKLSNLLVTALAVATGVVG). A Cu(2+)-binding site is contributed by histidine 22. Intrachain disulfides connect cysteine 77–cysteine 198 and cysteine 118–cysteine 122. N-linked (GlcNAc...) asparagine glycosylation occurs at asparagine 80. Histidine 107 is a Cu(2+) binding site. Asparagine 158 is a glycosylation site (N-linked (GlcNAc...) asparagine). Histidine 184 and glutamine 193 together coordinate O2. Tyrosine 195 serves as a coordination point for Cu(2+). The tract at residues 262-310 (ATASATVPGGGSGPTSRTTTTARTTQASSRPSSTPPATTSAPAGGPTQT) is disordered. Over residues 275-310 (PTSRTTTTARTTQASSRPSSTPPATTSAPAGGPTQT) the composition is skewed to low complexity. The region spanning 307–343 (PTQTLYGQCGGSGYSGPTRCAPPATCSTLNPYYAQCL) is the CBM1 domain.

Belongs to the polysaccharide monooxygenase AA9 family. It depends on Cu(2+) as a cofactor.

It is found in the secreted. It carries out the reaction [(1-&gt;4)-beta-D-glucosyl]n+m + reduced acceptor + O2 = 4-dehydro-beta-D-glucosyl-[(1-&gt;4)-beta-D-glucosyl]n-1 + [(1-&gt;4)-beta-D-glucosyl]m + acceptor + H2O.. Its function is as follows. Lytic polysaccharide monooxygenase (LPMO) that depolymerizes crystalline and amorphous polysaccharides via the oxidation of scissile alpha- or beta-(1-4)-glycosidic bonds, yielding C1 or C4 oxidation products. Catalysis by LPMOs requires the reduction of the active-site copper from Cu(II) to Cu(I) by a reducing agent and H(2)O(2) or O(2) as a cosubstrate. Shows activity on beta-glucan and amorphous cellulose. Does not show beta-1-3-glucanase, beta-1,6-glucanase, mannanase, xylanase, beta-1,3-galactosidase, amylase, pectinase, nor chitinase activities. This is AA9 family lytic polysaccharide monooxygenase cel61A from Hypocrea jecorina (Trichoderma reesei).